The sequence spans 427 residues: Gamma-glutamyl phosphate reductase (427 aa).

Belongs to the gamma-glutamyl phosphate reductase family.

The protein localises to the cytoplasm. It carries out the reaction L-glutamate 5-semialdehyde + phosphate + NADP(+) = L-glutamyl 5-phosphate + NADPH + H(+). It participates in amino-acid biosynthesis; L-proline biosynthesis; L-glutamate 5-semialdehyde from L-glutamate: step 2/2. Its function is as follows. Catalyzes the NADPH-dependent reduction of L-glutamate 5-phosphate into L-glutamate 5-semialdehyde and phosphate. The product spontaneously undergoes cyclization to form 1-pyrroline-5-carboxylate. The sequence is that of Gamma-glutamyl phosphate reductase from Rhizobium etli (strain CIAT 652).